Reading from the N-terminus, the 399-residue chain is MSKDKKNEDKETLEELKELSEWQKRNQEYLKKKAEEEAALAEEKEKERQARMGEESEKSEDKQDQESETDQEDSESAKEESEEKVASSEADKEKEEKEEPESKEKEEQDKKLAKKATKEKPAKAKIPGIHILRAFTILFPSLLLLFVSAYLLSPYATMKDIRVEGTVQTTADDIRQASGIQDSDYTINLLLDKAKYEKQIKSNYWVESAQLVYQFPTKFTIKVKEYDIVAYYISGENHYPILSSGQLETSSVSLNSLPETYLSVLFNDSEQIKVFVSELAQISPELKAAIQKVELAPSKVTSDLIRLTMNDSDEVLVPLSEMSKKLPYYSKIKPQLSEPSVVDMEAGIYSYTVADKLIMEAEEKAKQEAKEAEKKQEEEQKKQEEESNRNQTTQRSSRR.

Disordered stretches follow at residues 1–23 (MSKDKKNEDKETLEELKELSEWQ) and 35–119 (EEEA…ATKE). The Cytoplasmic segment spans residues 1-133 (MSKDKKNEDK…AKIPGIHILR (133 aa)). Basic and acidic residues-rich tracts occupy residues 35–65 (EEEAALAEEKEKERQARMGEESEKSEDKQDQ) and 75–119 (ESAK…ATKE). Residues 134 to 154 (AFTILFPSLLLLFVSAYLLSP) form a helical membrane-spanning segment. The Extracellular portion of the chain corresponds to 155–399 (YATMKDIRVE…NQTTQRSSRR (245 aa)). In terms of domain architecture, POTRA spans 156 to 226 (ATMKDIRVEG…TKFTIKVKEY (71 aa)). Basic and acidic residues predominate over residues 364-388 (KAKQEAKEAEKKQEEEQKKQEEESN). The segment at 364-399 (KAKQEAKEAEKKQEEEQKKQEEESNRNQTTQRSSRR) is disordered. Residues 389 to 399 (RNQTTQRSSRR) show a composition bias toward polar residues.

This sequence belongs to the FtsQ/DivIB family. DivIB subfamily.

It is found in the cell membrane. Cell division protein that may be involved in stabilizing or promoting the assembly of the division complex. This chain is Cell division protein DivIB, found in Streptococcus pneumoniae serotype 4 (strain ATCC BAA-334 / TIGR4).